Here is a 401-residue protein sequence, read N- to C-terminus: Argininosuccinate synthase (401 aa).

ATP contacts are provided by residues 9–17 (AYSGGLDTS) and Ala-36. L-citrulline-binding residues include Tyr-87 and Ser-92. Gly-117 serves as a coordination point for ATP. L-aspartate is bound by residues Thr-119, Asn-123, and Asp-124. Asn-123 lines the L-citrulline pocket. Residues Arg-127, Ser-176, Ser-185, Glu-261, and Tyr-273 each coordinate L-citrulline.

The protein belongs to the argininosuccinate synthase family. Type 1 subfamily. Homotetramer.

Its subcellular location is the cytoplasm. It catalyses the reaction L-citrulline + L-aspartate + ATP = 2-(N(omega)-L-arginino)succinate + AMP + diphosphate + H(+). It participates in amino-acid biosynthesis; L-arginine biosynthesis; L-arginine from L-ornithine and carbamoyl phosphate: step 2/3. The protein is Argininosuccinate synthase of Syntrophobacter fumaroxidans (strain DSM 10017 / MPOB).